The primary structure comprises 625 residues: Interleukin-1 receptor-associated kinase-like 2 (625 aa).

One can recognise a Death domain in the interval 13-94 (LDDPCRNMDA…RAAQIILNWK (82 aa)). The interval 111-181 (KPEKPLAASV…SSDSKDFSTS (71 aa)) is disordered. Ser-144 bears the Phosphoserine mark. Over residues 169 to 181 (LPTSSDSKDFSTS) the composition is skewed to polar residues. One can recognise a Protein kinase domain in the interval 210-503 (FNQNHKISQG…GSVAAVEEWL (294 aa)). Residues 216 to 224 (ISQGTFADV), Lys-237, and 337 to 340 (KSSN) contribute to the ATP site. Residues 513 to 539 (SGLSEGTGSSSNTPEETDDVDNSSLDA) form a disordered region. Residues 516–526 (SEGTGSSSNTP) show a composition bias toward polar residues.

It belongs to the protein kinase superfamily. TKL Ser/Thr protein kinase family. Pelle subfamily. In terms of assembly, interacts with MYD88. IL-1 stimulation leads to the formation of a signaling complex which dissociates from the IL-1 receptor following the binding of PELI1.

In terms of biological role, binds to the IL-1 type I receptor following IL-1 engagement, triggering intracellular signaling cascades leading to transcriptional up-regulation and mRNA stabilization. The chain is Interleukin-1 receptor-associated kinase-like 2 (IRAK2) from Pongo abelii (Sumatran orangutan).